Consider the following 35-residue polypeptide: Potassium channel toxin alpha-KTx 6.15 (35 aa).

Cystine bridges form between C3-C24, C9-C29, C13-C31, and C19-C34.

It belongs to the short scorpion toxin superfamily. Potassium channel inhibitor family. Alpha-KTx 06 subfamily. As to expression, expressed by the venom gland.

It localises to the secreted. Blocks voltage-gated potassium channels rKv1.1/KCNA1 (IC(50)=13 nM), rKv1.2/KCNA2 (IC(50)=16 nM) and rKv1.3/KCNA3 (IC(50)=2 nM). This is Potassium channel toxin alpha-KTx 6.15 from Hemiscorpius lepturus (Scorpion).